Consider the following 236-residue polypeptide: EP300-interacting inhibitor of differentiation 2 (236 aa).

Over residues 1–15 (MSQLPAVSSAPQTGA) the composition is skewed to polar residues. Residues 1–102 (MSQLPAVSSA…REGPAAAAAS (102 aa)) form a disordered region. Composition is skewed to low complexity over residues 32–68 (RALP…GRVA) and 75–102 (AAAA…AAAS). Residues Arg63 and Arg79 each carry the omega-N-methylarginine modification. The stretch at 170 to 190 (RIQELEERRRRFVEACRAREA) forms a coiled coil.

Heterodimer with EID2B. Interacts with the C-terminus of EP300. Interacts with HDAC1 and HDAC2. Interacts with SMAD2, SMAD4 and with the MH2 domain of SMAD3. As to expression, expressed in heart, brain, kidney and pancreas. Not detected in placenta.

The protein resides in the nucleus. Its function is as follows. Interacts with EP300 and acts as a repressor of MYOD-dependent transcription and muscle differentiation. Inhibits EP300 histone acetyltransferase activity. Acts as a repressor of TGFB/SMAD transcriptional responses. May act as a repressor of the TGFB/SMAD3-dependent signaling by selectively blocking formation of TGFB-induced SMAD3-SMAD4 complex. The polypeptide is EP300-interacting inhibitor of differentiation 2 (Mus musculus (Mouse)).